Here is a 143-residue protein sequence, read N- to C-terminus: 5-hydroxymethyl-dUMP N-hydrolase (143 aa).

Residues Gly7, Ile9, Arg10, Gly11, Ser77, Gly79, Glu83, and Ser107 each contribute to the 5-hydroxymethyl-dUMP site.

This sequence belongs to the 2'-deoxynucleoside 5'-phosphate N-hydrolase 1 family. Monomer and homodimer.

The protein resides in the cytoplasm. Its subcellular location is the nucleus. It catalyses the reaction 5-hydroxymethyl-dUMP + H2O = 5-hydroxymethyluracil + 2-deoxy-D-ribose 5-phosphate. In terms of biological role, part of a nucleotide salvage pathway that eliminates epigenetically modified 5-hydroxymethyl-dCMP (hmdCMP) in a two-step process entailing deamination to cytotoxic 5-hydroxymethyl-dUMP (hmdUMP), followed by its hydrolysis into 5-hydroxymethyluracil (hmU) and 2-deoxy-D-ribose 5-phosphate (deoxyribosephosphate). This is 5-hydroxymethyl-dUMP N-hydrolase (dnph1) from Danio rerio (Zebrafish).